A 517-amino-acid polypeptide reads, in one-letter code: Cytochrome P450 monooxygenase TRI4 (517 aa).

The chain crosses the membrane as a helical span at residues 15 to 37 (AVGAAVAVGALYFFCQCFYNLYL). The N-linked (GlcNAc...) asparagine glycan is linked to N444. Position 452 (C452) interacts with heme.

It belongs to the cytochrome P450 family. It depends on heme as a cofactor.

The protein localises to the membrane. It participates in sesquiterpene biosynthesis; trichothecene biosynthesis. Functionally, cytochrome P450 monooxygenase; part of the gene cluster that mediates the production of the antimicrobial trichothecene harzianum A (HA) that plays a role in Botrytis cinerea antagonistic activity and plant defense priming. The biosynthesis of harzianum A begins with the cyclization of farnesyl diphosphate to trichodiene and is catalyzed by the trichodiene synthase TRI5. Trichodiene undergoes a series of oxygenations catalyzed by the cytochrome P450 monooxygenase TRI4. TRI4 controls the addition of 3 oxygens at C-2, C-11, and the C-12, C-13-epoxide to form the intermediate isotrichodiol. Isotrichodiol then undergoes a non-enzymatic isomerization and cyclization to form 12,13-epoxytrichothec-9-ene (EPT) which is further converted to trichodermol by the cytochrome P450 monooxygenase TRI11 via C-4 hydroxylation. The last step of HA synthesis is esterification of an octatriendioyl moiety to the C-4 oxygen of trichodermol. The octatriendioyl moiety is probably produced by the polyketide synthase TRI17 and the esterification performed by the trichothecene O-acetyltransferase TRI3. This Trichoderma arundinaceum protein is Cytochrome P450 monooxygenase TRI4.